A 282-amino-acid polypeptide reads, in one-letter code: NADPH-dependent 7-cyano-7-deazaguanine reductase (282 aa).

I88–S90 lines the substrate pocket. S90 to K91 serves as a coordination point for NADPH. C190 (thioimide intermediate) is an active-site residue. The active-site Proton donor is D197. H229–E230 provides a ligand contact to substrate. R258 to G259 lines the NADPH pocket.

Belongs to the GTP cyclohydrolase I family. QueF type 2 subfamily. As to quaternary structure, homodimer.

Its subcellular location is the cytoplasm. The enzyme catalyses 7-aminomethyl-7-carbaguanine + 2 NADP(+) = 7-cyano-7-deazaguanine + 2 NADPH + 3 H(+). It functions in the pathway tRNA modification; tRNA-queuosine biosynthesis. Catalyzes the NADPH-dependent reduction of 7-cyano-7-deazaguanine (preQ0) to 7-aminomethyl-7-deazaguanine (preQ1). This is NADPH-dependent 7-cyano-7-deazaguanine reductase from Pectobacterium carotovorum subsp. carotovorum (strain PC1).